The sequence spans 280 residues: Myelin proteolipid protein A (280 aa).

The Cytoplasmic segment spans residues 1–10 (MGWHDGCIRC). 2 S-palmitoyl cysteine lipidation sites follow: Cys7 and Cys10. Residues 11-36 (MVGVPFASVIATVLCFAGVALFCGCG) form a helical membrane-spanning segment. Topologically, residues 37–59 (HEALSGTEKLIETYFSKNYQEYE) are extracellular. Residues 60–88 (YLIHVINAFQYVIYGIAIFFFLFGILLLA) form a helical membrane-spanning segment. Residues 89–152 (EGFYTTTAIK…LGKWLGHPDK (64 aa)) are Cytoplasmic-facing. 2 S-palmitoyl cysteine lipidation sites follow: Cys140 and Cys142. The chain crosses the membrane as a helical span at residues 153–179 (FVGVTYIITILWILIFACSAVPVYIYF). Topologically, residues 180–239 (NTWVTCQSIAFPGKTTTSVSTLCSDARMYGVLPWNAFPGKVCGTSLLAICKTSEFQMTFH) are extracellular. Disulfide bonds link Cys185/Cys229 and Cys202/Cys221. The chain crosses the membrane as a helical span at residues 240–269 (LFIAAFVGAAATLVALLTYMVGASFNYAVL). The Cytoplasmic portion of the chain corresponds to 270–280 (RVTGRSDRSKF).

Belongs to the myelin proteolipid protein family.

It is found in the cell membrane. Functionally, this is the major myelin protein from the central nervous system. It plays an important role in the formation or maintenance of the multilamellar structure of myelin. The polypeptide is Myelin proteolipid protein A (plp1-a) (Xenopus laevis (African clawed frog)).